A 282-amino-acid polypeptide reads, in one-letter code: Protein MGF 505-3R (282 aa).

This sequence belongs to the asfivirus MGF 505 family.

In terms of biological role, plays a role in virus cell tropism, and may be required for efficient virus replication in macrophages. In Ornithodoros (relapsing fever ticks), this protein is Protein MGF 505-3R.